The chain runs to 278 residues: MALKSYNPTSPARRGLVLVDKSALWKGKPVKALTEGKRKTGGRNNKGHVTSRGIAGGHKQKYRYVDFKRRKWDMPATVERLEYDPNRTAFIALVKYEDGELAYILAPQRLGVGDQVIAGEKTDVKPGNAMLLSQMPVGTIIHNVEMKPGKGGQIARSAGTYVQLVGRDRGMVIVRLNSGEQRYLRGDCMGTVGAVSNPDNGNQNLAKAGRNRWLGKRPLTRGVAKNPVDHPHGGGEGRTSGGRHPVTPWGKPTKGARTRHNKATDKMIIRSRHAKKKR.

Disordered stretches follow at residues 33–53 and 221–278; these read LTEG…TSRG and RGVA…KKKR. The span at 269-278 shows a compositional bias: basic residues; sequence IRSRHAKKKR.

This sequence belongs to the universal ribosomal protein uL2 family. In terms of assembly, part of the 50S ribosomal subunit. Forms a bridge to the 30S subunit in the 70S ribosome.

Its function is as follows. One of the primary rRNA binding proteins. Required for association of the 30S and 50S subunits to form the 70S ribosome, for tRNA binding and peptide bond formation. It has been suggested to have peptidyltransferase activity; this is somewhat controversial. Makes several contacts with the 16S rRNA in the 70S ribosome. The polypeptide is Large ribosomal subunit protein uL2 (Novosphingobium aromaticivorans (strain ATCC 700278 / DSM 12444 / CCUG 56034 / CIP 105152 / NBRC 16084 / F199)).